Here is a 422-residue protein sequence, read N- to C-terminus: Acetyl-CoA acetyltransferase, mitochondrial (422 aa).

A mitochondrion-targeting transit peptide spans 1–28; the sequence is MPVLAALLRRGPLLQRRVQEIRYAERSY. An N6-acetyllysine; alternate modification is found at Lys61. At Lys61 the chain carries N6-succinyllysine; alternate. Residue Lys73 is modified to N6-succinyllysine. Catalysis depends on Cys121, which acts as the Acyl-thioester intermediate. 4 positions are modified to N6-acetyllysine; alternate: Lys169, Lys176, Lys185, and Lys197. N6-succinyllysine; alternate occurs at positions 169, 176, 185, and 197. Tyr214 is a binding site for CoA. Tyr214 provides a ligand contact to K(+). Position 218 is an N6-acetyllysine; alternate (Lys218). Lys218 carries the post-translational modification N6-succinyllysine; alternate. Position 238 is an N6-succinyllysine (Lys238). Lys240 carries the N6-acetyllysine; alternate modification. Lys240 is subject to N6-succinyllysine; alternate. N6-acetyllysine is present on residues Lys246 and Lys252. Residues 253 to 255 and Lys258 contribute to the CoA site; that span reads RVD. Lys258 is modified (N6-acetyllysine; alternate). Lys258 is subject to N6-succinyllysine; alternate. 2 positions are modified to N6-succinyllysine: Lys261 and Lys263. K(+) contacts are provided by Ala275, Ala276, and Ala278. Position 279 (Ser279) interacts with CoA. The residue at position 333 (Lys333) is an N6-acetyllysine. A K(+)-binding site is contributed by Val376. The active-site Proton donor/acceptor is Cys408.

The protein belongs to the thiolase-like superfamily. Thiolase family. In terms of assembly, homotetramer. In terms of processing, succinylation at Lys-263, adjacent to a coenzyme A binding site. Desuccinylated by SIRT5.

The protein resides in the mitochondrion. The enzyme catalyses 2 acetyl-CoA = acetoacetyl-CoA + CoA. It catalyses the reaction propanoyl-CoA + acetyl-CoA = 2-methyl-3-oxobutanoyl-CoA + CoA. The protein operates within lipid metabolism; fatty acid beta-oxidation. Its activity is regulated as follows. Activated by potassium ions, but not sodium ions. In terms of biological role, this is one of the enzymes that catalyzes the last step of the mitochondrial beta-oxidation pathway, an aerobic process breaking down fatty acids into acetyl-CoA. Using free coenzyme A/CoA, catalyzes the thiolytic cleavage of medium- to long-chain 3-oxoacyl-CoAs into acetyl-CoA and a fatty acyl-CoA shortened by two carbon atoms. The activity of the enzyme is reversible and it can also catalyze the condensation of two acetyl-CoA molecules into acetoacetyl-CoA. Thereby, it plays a major role in ketone body metabolism. In Bos taurus (Bovine), this protein is Acetyl-CoA acetyltransferase, mitochondrial (ACAT1).